We begin with the raw amino-acid sequence, 346 residues long: UDP-N-acetylenolpyruvoylglucosamine reductase (346 aa).

Residues leucine 18–histidine 189 enclose the FAD-binding PCMH-type domain. Arginine 165 is an active-site residue. Residue serine 240 is the Proton donor of the active site. Residue glutamate 336 is part of the active site.

It belongs to the MurB family. FAD serves as cofactor.

The protein resides in the cytoplasm. It catalyses the reaction UDP-N-acetyl-alpha-D-muramate + NADP(+) = UDP-N-acetyl-3-O-(1-carboxyvinyl)-alpha-D-glucosamine + NADPH + H(+). It participates in cell wall biogenesis; peptidoglycan biosynthesis. Cell wall formation. In Neisseria meningitidis serogroup C (strain 053442), this protein is UDP-N-acetylenolpyruvoylglucosamine reductase.